The chain runs to 311 residues: Apolipoprotein E (311 aa).

Positions 1-18 are cleaved as a signal peptide; that stretch reads MKVWWAVLAAAILAGCRA. A run of 8 repeats spans residues 74 to 95, 96 to 116, 117 to 138, 139 to 160, 161 to 182, 183 to 204, 205 to 226, and 227 to 248. Positions 74-248 are 8 X 22 AA approximate tandem repeats; the sequence is MLMEETMKEV…RLNEVREQVE (175 aa). Methionine sulfoxide is present on Met136. Position 140 is a phosphoserine (Ser140). The segment at 151-161 is LDL and other lipoprotein receptors binding; the sequence is HLRKLRKRLLR. Residue 155–158 coordinates heparin; the sequence is LRKR. A lipid-binding and lipoprotein association region spans residues 203 to 283; sequence VATVGTLAGR…SWFEPLVEDM (81 aa). Thr205 carries an O-linked (GalNAc...) threonine glycan. A heparin-binding site is contributed by 222-229; the sequence is GERLRGHL. Residues 259–311 form a homooligomerization region; it reads PQMRLQAEAFQARLKSWFEPLVEDMQRQWAGLVEKLQAAMPSKAPAAAPIENQ. Residues 271-283 form a specificity for association with VLDL region; the sequence is RLKSWFEPLVEDM.

This sequence belongs to the apolipoprotein A1/A4/E family. As to quaternary structure, homotetramer. May interact with ABCA1; functionally associated with ABCA1 in the biogenesis of HDLs. May interact with APP/A4 amyloid-beta peptide; the interaction is extremely stable in vitro but its physiological significance is unclear. May interact with MAPT. May interact with MAP2. In the cerebrospinal fluid, interacts with secreted SORL1. Interacts with PMEL; this allows the loading of PMEL luminal fragment on ILVs to induce fibril nucleation. In terms of processing, APOE exists as multiple glycosylated and sialylated glycoforms within cells and in plasma. The extent of glycosylation and sialylation are tissue and context specific. Glycated in plasma VLDL. Post-translationally, phosphorylated by FAM20C in the extracellular medium.

The protein resides in the secreted. It localises to the extracellular space. It is found in the extracellular matrix. Its subcellular location is the extracellular vesicle. The protein localises to the endosome. The protein resides in the multivesicular body. Its function is as follows. APOE is an apolipoprotein, a protein associating with lipid particles, that mainly functions in lipoprotein-mediated lipid transport between organs via the plasma and interstitial fluids. APOE is a core component of plasma lipoproteins and is involved in their production, conversion and clearance. Apolipoproteins are amphipathic molecules that interact both with lipids of the lipoprotein particle core and the aqueous environment of the plasma. As such, APOE associates with chylomicrons, chylomicron remnants, very low density lipoproteins (VLDL) and intermediate density lipoproteins (IDL) but shows a preferential binding to high-density lipoproteins (HDL). It also binds a wide range of cellular receptors including the LDL receptor/LDLR and the very low-density lipoprotein receptor/VLDLR that mediate the cellular uptake of the APOE-containing lipoprotein particles. Finally, APOE also has a heparin-binding activity and binds heparan-sulfate proteoglycans on the surface of cells, a property that supports the capture and the receptor-mediated uptake of APOE-containing lipoproteins by cells. The polypeptide is Apolipoprotein E (APOE) (Oryctolagus cuniculus (Rabbit)).